The following is a 203-amino-acid chain: MAEGDNRSTNLLAAETASLEEQLQGWGEVMLMADKVLRWERAWFPPAIMGVVSLVFLIIYYLDPSVLSGVSCFVMFLCLADYLVPILAPRIFGSNKWTTEQQQRFHEICSNLVKTRRRAVGWWKRLFTLKEEKPKMYFMTMIVSLAAVAWVGQQVHNLLLTYLIVTSLLLLPGLNQHGIILKYIGMAKREINKLLKQKEKKNE.

Over 1-41 (MAEGDNRSTNLLAAETASLEEQLQGWGEVMLMADKVLRWER) the chain is Cytoplasmic. Residues 42-62 (AWFPPAIMGVVSLVFLIIYYL) traverse the membrane as a helical segment. Residues 63–65 (DPS) lie on the Lumenal side of the membrane. Residues 66 to 86 (VLSGVSCFVMFLCLADYLVPI) form a helical membrane-spanning segment. The Cytoplasmic segment spans residues 87–133 (LAPRIFGSNKWTTEQQQRFHEICSNLVKTRRRAVGWWKRLFTLKEEK). A helical transmembrane segment spans residues 134 to 175 (PKMYFMTMIVSLAAVAWVGQQVHNLLLTYLIVTSLLLLPGLN). At 176-203 (QHGIILKYIGMAKREINKLLKQKEKKNE) the chain is on the lumenal side.

Belongs to the ARL6ip family. In terms of assembly, homooligomer. Heterodimer with ARL6IP5. Interacts with ARL6. Interacts with TMEM33. Interacts with ATL1. As to expression, expressed in all hematopoietic cell lineages, but the highest level of expression is found in early myeloid progenitor cells. Expressed in brain, bone marrow, thymus and lung. Expressed at low level in liver, kidney and spleen. Not detected in heart.

It localises to the endomembrane system. It is found in the endoplasmic reticulum membrane. Its subcellular location is the endoplasmic reticulum. Positively regulates SLC1A1/EAAC1-mediated glutamate transport by increasing its affinity for glutamate in a PKC activity-dependent manner. Promotes the catalytic efficiency of SLC1A1/EAAC1 probably by reducing its interaction with ARL6IP5, a negative regulator of SLC1A1/EAAC1-mediated glutamate transport. Plays a role in the formation and stabilization of endoplasmic reticulum tubules. Negatively regulates apoptosis, possibly by modulating the activity of caspase-9 (CASP9). Inhibits cleavage of CASP9-dependent substrates and downstream markers of apoptosis but not CASP9 itself. May be involved in protein transport, membrane trafficking, or cell signaling during hematopoietic maturation. The protein is ADP-ribosylation factor-like protein 6-interacting protein 1 (ARL6IP1) of Homo sapiens (Human).